Consider the following 389-residue polypeptide: Succinate--CoA ligase [ADP-forming] subunit beta (389 aa).

The ATP-grasp domain maps to 9–244; that stretch reads KAVLAKYGVP…LTEEDPAEVE (236 aa). ATP is bound by residues K46, 53–55, E99, S102, and E107; that span reads GRG. N199 and D213 together coordinate Mg(2+). Residues N264 and 321 to 323 each bind substrate; that span reads GIM.

Belongs to the succinate/malate CoA ligase beta subunit family. Heterotetramer of two alpha and two beta subunits. Requires Mg(2+) as cofactor.

It catalyses the reaction succinate + ATP + CoA = succinyl-CoA + ADP + phosphate. It carries out the reaction GTP + succinate + CoA = succinyl-CoA + GDP + phosphate. The protein operates within carbohydrate metabolism; tricarboxylic acid cycle; succinate from succinyl-CoA (ligase route): step 1/1. Succinyl-CoA synthetase functions in the citric acid cycle (TCA), coupling the hydrolysis of succinyl-CoA to the synthesis of either ATP or GTP and thus represents the only step of substrate-level phosphorylation in the TCA. The beta subunit provides nucleotide specificity of the enzyme and binds the substrate succinate, while the binding sites for coenzyme A and phosphate are found in the alpha subunit. The chain is Succinate--CoA ligase [ADP-forming] subunit beta from Parvibaculum lavamentivorans (strain DS-1 / DSM 13023 / NCIMB 13966).